Reading from the N-terminus, the 173-residue chain is Small ribosomal subunit protein uS7 (173 aa).

This sequence belongs to the universal ribosomal protein uS7 family. Part of the 30S ribosomal subunit. Contacts proteins S9 and S11.

Its function is as follows. One of the primary rRNA binding proteins, it binds directly to 16S rRNA where it nucleates assembly of the head domain of the 30S subunit. Is located at the subunit interface close to the decoding center, probably blocks exit of the E-site tRNA. This chain is Small ribosomal subunit protein uS7, found in Orientia tsutsugamushi (strain Ikeda) (Rickettsia tsutsugamushi).